A 166-amino-acid chain; its full sequence is Bacterial non-heme ferritin (166 aa).

The Ferritin-like diiron domain maps to leucine 2–glycine 145. Residues glutamate 17, glutamate 50, histidine 53, glutamate 94, and glutamine 127 each coordinate Fe cation.

This sequence belongs to the ferritin family. Prokaryotic subfamily.

The protein localises to the cytoplasm. The enzyme catalyses 4 Fe(2+) + O2 + 6 H2O = 4 iron(III) oxide-hydroxide + 12 H(+). In terms of biological role, iron-storage protein. The polypeptide is Bacterial non-heme ferritin (ftnA) (Staphylococcus epidermidis (strain ATCC 35984 / DSM 28319 / BCRC 17069 / CCUG 31568 / BM 3577 / RP62A)).